The chain runs to 401 residues: Phosphonopyruvate decarboxylase (401 aa).

Residues 382–401 (WPASAVGSGTRAAAGSAGDR) form a disordered region. A compositionally biased stretch (low complexity) spans 384–401 (ASAVGSGTRAAAGSAGDR).

This sequence belongs to the TPP enzyme family. It depends on thiamine diphosphate as a cofactor. Requires Mg(2+) as cofactor.

It carries out the reaction 3-phosphonopyruvate + H(+) = phosphonoacetaldehyde + CO2. Its pathway is secondary metabolite biosynthesis; bialaphos biosynthesis. Functionally, involved in the biosynthesis of phosphinothricin tripeptide (PTT), also known as bialaphos (BA), a natural-product antibiotic and potent herbicide. Catalyzes the decarboxylation of phosphonopyruvate (PnPy) to generate phosphonoacetaldehyde (PnAA). This Streptomyces hygroscopicus protein is Phosphonopyruvate decarboxylase.